A 378-amino-acid polypeptide reads, in one-letter code: Tetraacyldisaccharide 4'-kinase (378 aa).

An ATP-binding site is contributed by 63–70 (AVGGAGKT).

Belongs to the LpxK family.

It catalyses the reaction a lipid A disaccharide + ATP = a lipid IVA + ADP + H(+). The protein operates within glycolipid biosynthesis; lipid IV(A) biosynthesis; lipid IV(A) from (3R)-3-hydroxytetradecanoyl-[acyl-carrier-protein] and UDP-N-acetyl-alpha-D-glucosamine: step 6/6. Transfers the gamma-phosphate of ATP to the 4'-position of a tetraacyldisaccharide 1-phosphate intermediate (termed DS-1-P) to form tetraacyldisaccharide 1,4'-bis-phosphate (lipid IVA). In Anaeromyxobacter sp. (strain K), this protein is Tetraacyldisaccharide 4'-kinase.